The primary structure comprises 245 residues: tRNA (guanine-N(1)-)-methyltransferase (245 aa).

S-adenosyl-L-methionine contacts are provided by residues Gly113 and Ile133–Leu138.

Belongs to the RNA methyltransferase TrmD family. As to quaternary structure, homodimer.

It is found in the cytoplasm. It carries out the reaction guanosine(37) in tRNA + S-adenosyl-L-methionine = N(1)-methylguanosine(37) in tRNA + S-adenosyl-L-homocysteine + H(+). In terms of biological role, specifically methylates guanosine-37 in various tRNAs. The chain is tRNA (guanine-N(1)-)-methyltransferase from Oceanobacillus iheyensis (strain DSM 14371 / CIP 107618 / JCM 11309 / KCTC 3954 / HTE831).